Here is a 103-residue protein sequence, read N- to C-terminus: uncharacterized protein (103 aa).

Residues 12 to 88 form the EthD domain; sequence ADPAAFDEHY…AAADVANFAS (77 aa).

This is an uncharacterized protein from Rhodococcus erythropolis (Arthrobacter picolinophilus).